The sequence spans 213 residues: MRILITGFDPFGGERVNPALEAVKLLPDEIGAHKIDKLEIPTVFHKSKDVILSQMKRYEYDIVLAIGQAGGRYELTPERVGINVDDARIADNEGNQPIDEVIQVDGNAAYFSNLPVKRITEAIKAQGIPSRLSNTAGTFVCNHILYQLGYLQATAFPKIKFGFIHVPFVPEQVTDKPEKPSMSLETIRIGLYAALEAIVESGEDIKVALGETH.

Residues Glu78, Cys141, and His165 contribute to the active site.

This sequence belongs to the peptidase C15 family. Homotetramer.

The protein resides in the cytoplasm. It catalyses the reaction Release of an N-terminal pyroglutamyl group from a polypeptide, the second amino acid generally not being Pro.. In terms of biological role, removes 5-oxoproline from various penultimate amino acid residues except L-proline. This is Pyrrolidone-carboxylate peptidase from Staphylococcus saprophyticus subsp. saprophyticus (strain ATCC 15305 / DSM 20229 / NCIMB 8711 / NCTC 7292 / S-41).